Consider the following 1529-residue polypeptide: Myosin-11 (1529 aa).

Positions 11–60 (IVGSHVWIEDSDVAWIDGLVEKINGQDVEVQATNGKKITAKLSKIYPKDM) constitute a Myosin N-terminal SH3-like domain. The 671-residue stretch at 65–735 (GGVDDMTKLS…QMAELDARRT (671 aa)) folds into the Myosin motor domain. Residues 159–166 (GESGAGKT) and 212–220 (NNNSSRFGK) contribute to the ATP site. 4 actin-binding regions span residues 498-532 (LIEK…YQTF), 534-557 (THKR…AGEV), 592-616 (FPPL…KLQL), and 616-638 (LQQL…KPNN). IQ domains follow at residues 738–767 (LSAA…ATIS), 761–790 (LRKA…QAAA), 786–815 (RQAA…AALV), 809–838 (LHVA…TKAA), 834–863 (QTKA…GVIL), and 857–886 (LKKG…ASRE). Positions 887–1059 (TGALKEAKDM…VLRQQAVSIA (173 aa)) form a coiled coil. The span at 993–1027 (EQEKQRADDATRKFDEAQESSEDRKKKLEDTEKKA) shows a compositional bias: basic and acidic residues. 2 disordered regions span residues 993-1031 (EQEK…QQLQ) and 1096-1115 (INRR…LNEK). The 310-residue stretch at 1163–1472 (DRIIQTIGQA…IANMRVLMTE (310 aa)) folds into the Dilute domain.

Belongs to the TRAFAC class myosin-kinesin ATPase superfamily. Myosin family. Plant myosin class XI subfamily. Homodimer.

The protein localises to the cytoplasm. Functionally, myosin heavy chain that is required for the cell cycle-regulated transport of various organelles and proteins for their segregation. Functions by binding with its tail domain to receptor proteins on organelles and exerting force with its N-terminal motor domain against actin filaments, thereby transporting its cargo along polarized actin cables. Involved in trafficking of Golgi stacks, mitochondria and peroxisomes. In Arabidopsis thaliana (Mouse-ear cress), this protein is Myosin-11 (XI-E).